A 604-amino-acid chain; its full sequence is Glutamine--fructose-6-phosphate aminotransferase [isomerizing] (604 aa).

Catalysis depends on Cys2, which acts as the Nucleophile; for GATase activity. Residues 2–219 (CGIMGAVSER…EGDSACVTTQ (218 aa)) form the Glutamine amidotransferase type-2 domain. 2 consecutive SIS domains span residues 279–427 (LRAS…DNRA) and 454–594 (LASL…VDQP). Catalysis depends on Lys599, which acts as the For Fru-6P isomerization activity.

Homodimer.

Its subcellular location is the cytoplasm. It catalyses the reaction D-fructose 6-phosphate + L-glutamine = D-glucosamine 6-phosphate + L-glutamate. Its function is as follows. Catalyzes the first step in hexosamine metabolism, converting fructose-6P into glucosamine-6P using glutamine as a nitrogen source. The polypeptide is Glutamine--fructose-6-phosphate aminotransferase [isomerizing] (Legionella pneumophila subsp. pneumophila (strain Philadelphia 1 / ATCC 33152 / DSM 7513)).